Here is a 494-residue protein sequence, read N- to C-terminus: WD repeat-containing protein 37 (494 aa).

2 stretches are compositionally biased toward polar residues: residues 1-13 (MPTE…TARQ) and 22-31 (SLSIRRTNSS). Residues 1 to 50 (MPTESASCSTARQTKQKRKSHSLSIRRTNSSEQERTGLPRDMLEGQDSKL) are disordered. A compositionally biased stretch (basic and acidic residues) spans 32-47 (EQERTGLPRDMLEGQD). 2 WD repeats span residues 154–194 (GHRD…CLVK) and 197–236 (GHVG…PTPQ). Residues 237–265 (PVADTSISGEDEVECSDKDEPDLDGDVSS) form a disordered region. Positions 245-263 (GEDEVECSDKDEPDLDGDV) are enriched in acidic residues. 5 WD repeats span residues 279-318 (SHQG…LVHS), 321-360 (GHDQ…IHSV), 365-403 (GHTD…SPIA), 406-445 (RTDS…LARL), and 452-493 (GHRR…LLQE).

Forms homodimers. Interacts with PACS1. Interacts with PACS2.

It is found in the cytoplasm. The protein localises to the nucleus. Required for normal ER Ca2+ handling in lymphocytes. Together with PACS1, it plays an essential role in stabilizing peripheral lymphocyte populations. The sequence is that of WD repeat-containing protein 37 (WDR37) from Homo sapiens (Human).